The sequence spans 150 residues: Ribonuclease H (150 aa).

The RNase H type-1 domain occupies 7 to 148; it reads ESNIVEIWTD…ADQLATKARM (142 aa). Mg(2+) is bound by residues Asp16, Glu54, Asp76, and Asp140.

Belongs to the RNase H family. In terms of assembly, monomer. Mg(2+) serves as cofactor.

The protein resides in the cytoplasm. It catalyses the reaction Endonucleolytic cleavage to 5'-phosphomonoester.. Endonuclease that specifically degrades the RNA of RNA-DNA hybrids. This Granulibacter bethesdensis (strain ATCC BAA-1260 / CGDNIH1) protein is Ribonuclease H.